The chain runs to 1049 residues: Cilia- and flagella-associated protein 337 (1049 aa).

Residues 81–116 (GTKEEYGELFDKVDVAQDGFINWDKLTSFILLELYE) enclose the EF-hand domain. WD repeat units lie at residues 138–177 (KHKD…QETF), 358–397 (NIAQ…KPVG), 401–440 (GHSA…SIQR), 487–528 (SHEK…KQFT), 531–570 (HGNA…HHTL), and 633–671 (QHHD…AHHV). Residues 691 to 712 (LLSAGRSQPSHPMADHSTTGVR) form a disordered region. The span at 695-711 (GRSQPSHPMADHSTTGV) shows a compositional bias: polar residues. WD repeat units lie at residues 719 to 766 (EGKN…LLAE), 769 to 809 (AHSG…LNSS), and 825 to 866 (PHED…VWIF).

Belongs to the CFAP337 family. Associates with components of the nexin-dynein regulatory complex (N-DRC) and the CFAP184:CFAP263 complex.

Its subcellular location is the cell projection. It localises to the cilium. Associates with components of the nexin-dynein regulatory complex (N-DRC), a key regulator of ciliary/flagellar motility, and might act as an inner dynein arm (IDA) hub or linkage. In Homo sapiens (Human), this protein is Cilia- and flagella-associated protein 337.